A 72-amino-acid chain; its full sequence is Hypotensin (72 aa).

Positions 1–24 are cleaved as a signal peptide; the sequence is MKMMIAVFVSILLLMFSLSSTAMG. Propeptides lie at residues 25–35 and 61–72; these read METEQQNMEER and RFDPATFGENED.

The protein belongs to the non-disulfide-bridged peptide (NDBP) superfamily. Expressed by the venom gland.

It is found in the secreted. Functionally, potentiates the hypotensive action of bradykinin (BK) in normotensive rats, and induces a vasorelaxant effect in mesenteric artery rings that is induced by endothelium-dependent release of nitric oxide (NO). Does not inhibit angiotensin converting enzyme (ACE). Shows neither hemolytic activity nor cytotoxicity to normal and cancer cells. Shows moderate antimicrobial activity against the fungi Candida albicans and the filamentous fungus Trichophyton rubrum, as well as against the bacteria C.albicans (MIC=128 ug/mL), C.tropicalis (MIC=128 ug/mL) and Aspergillus flavus (MIC=128 ug/mL). Has no antimicrobial activity against S.aureus, S.epidermidis and P.aeruginosa. This chain is Hypotensin, found in Tityus stigmurus (Brazilian scorpion).